The primary structure comprises 293 residues: 33 kDa chaperonin (293 aa).

2 disulfides stabilise this stretch: C239/C241 and C272/C275.

Belongs to the HSP33 family. Under oxidizing conditions two disulfide bonds are formed involving the reactive cysteines. Under reducing conditions zinc is bound to the reactive cysteines and the protein is inactive.

It localises to the cytoplasm. Its function is as follows. Redox regulated molecular chaperone. Protects both thermally unfolding and oxidatively damaged proteins from irreversible aggregation. Plays an important role in the bacterial defense system toward oxidative stress. The protein is 33 kDa chaperonin of Limosilactobacillus fermentum (strain NBRC 3956 / LMG 18251) (Lactobacillus fermentum).